A 371-amino-acid chain; its full sequence is Palmitoyl-monogalactosyldiacylglycerol delta-7 desaturase, chloroplastic (371 aa).

The N-terminal 67 residues, 1–67 (MASLLTKPKP…KGLKRDVTTA (67 aa)), are a transit peptide targeting the chloroplast. A run of 2 helical transmembrane segments spans residues 103–123 (FGAV…PFQF) and 127–147 (AVSV…TLSF). Positions 148 to 153 (HRNLSH) match the Histidine box-1 motif. Positions 185-189 (HRYHH) match the Histidine box-2 motif. A helical membrane pass occupies residues 251 to 271 (ALAVALYAMGGFPFIVWGMGV). Positions 317 to 321 (HNNHH) match the Histidine box-3 motif.

This sequence belongs to the fatty acid desaturase type 1 family. Fe(2+) serves as cofactor. As to expression, highly expressed in young leaves. Low expression in roots.

Its subcellular location is the plastid. It localises to the chloroplast membrane. The enzyme catalyses a 1-acyl-2-hexadecanoyl-glycerolipid + 2 reduced [2Fe-2S]-[ferredoxin] + O2 + 2 H(+) = a 1-acyl-2-[(7Z)-hexadecenoyl]-glycerolipid + 2 oxidized [2Fe-2S]-[ferredoxin] + 2 H2O. The protein operates within lipid metabolism; oxylipin biosynthesis. It functions in the pathway lipid metabolism; polyunsaturated fatty acid biosynthesis. In terms of biological role, fatty acid desaturase involved in the first desaturation step leading to the formation of hexadeca 7,10,13-trienoic acid (16:3(7Z,10Z,13Z)), the major functional components of thylakoid membranes. Required for chloroplast biogenesis at low temperature. Also indirectly involved in the production of the oxylipin dinor-oxo-phyto-dienoic acid implicated in wound signaling. In Arabidopsis thaliana (Mouse-ear cress), this protein is Palmitoyl-monogalactosyldiacylglycerol delta-7 desaturase, chloroplastic.